Reading from the N-terminus, the 633-residue chain is Chitin synthase regulatory factor 4 (633 aa).

The tract at residues 121-151 (ATSSQETKRDRPLPNIRNSAPSATRSHSTPC) is disordered. Over residues 136 to 149 (IRNSAPSATRSHST) the composition is skewed to polar residues. A Phosphoserine modification is found at Ser-148. 5 Sel1-like repeats span residues 278–314 (AKAMYFDAYVYETGAFDVESDIQRAWDLYSSSANLGY), 315–346 (TRSLYRLGVLLEDQGNLEEAVEYFEKGVSEND), 438–474 (SSAQLRMGAVYEFGKYGCPVVPRYSLFYYSAAAKRGE), 475–511 (TEADLAVAKWYLNGSDGIPVDEDLAFMHAERASMAGN), and 512–543 (ANAQFLMGYLFDTRGNTEQATYWYNEAAKAGH). A disordered region spans residues 583–613 (ASETSPPHAPAVSSTPVTSAPPVSQTKVTKV). Residues 592–613 (PAVSSTPVTSAPPVSQTKVTKV) show a composition bias toward low complexity.

It is found in the cytoplasm. Involved in septum formation. Required for the proper localization of chs2 at the septum. The chain is Chitin synthase regulatory factor 4 (chr4) from Schizosaccharomyces pombe (strain 972 / ATCC 24843) (Fission yeast).